A 122-amino-acid chain; its full sequence is Large ribosomal subunit protein uL14 (122 aa).

It belongs to the universal ribosomal protein uL14 family. As to quaternary structure, part of the 50S ribosomal subunit. Forms a cluster with proteins L3 and L19. In the 70S ribosome, L14 and L19 interact and together make contacts with the 16S rRNA in bridges B5 and B8.

Its function is as follows. Binds to 23S rRNA. Forms part of two intersubunit bridges in the 70S ribosome. The chain is Large ribosomal subunit protein uL14 from Shewanella amazonensis (strain ATCC BAA-1098 / SB2B).